Reading from the N-terminus, the 273-residue chain is Putative phosphoenolpyruvate synthase regulatory protein (273 aa).

ADP is bound at residue 154–161 (GVSRSGKT).

This sequence belongs to the pyruvate, phosphate/water dikinase regulatory protein family. PSRP subfamily.

The enzyme catalyses [pyruvate, water dikinase] + ADP = [pyruvate, water dikinase]-phosphate + AMP + H(+). The catalysed reaction is [pyruvate, water dikinase]-phosphate + phosphate + H(+) = [pyruvate, water dikinase] + diphosphate. Functionally, bifunctional serine/threonine kinase and phosphorylase involved in the regulation of the phosphoenolpyruvate synthase (PEPS) by catalyzing its phosphorylation/dephosphorylation. The protein is Putative phosphoenolpyruvate synthase regulatory protein of Neisseria meningitidis serogroup C (strain 053442).